The chain runs to 142 residues: Hemoglobin subunit alpha-1 (142 aa).

Residues 2–142 (KLSADDKHNV…VGYVLASKYR (141 aa)) enclose the Globin domain. Position 59 (His59) interacts with O2. Residue His88 participates in heme b binding.

Belongs to the globin family. As to quaternary structure, major hemoglobin is a heterotetramer of two alpha-1 chains and two beta-1 chains. In terms of tissue distribution, red blood cells.

Involved in oxygen transport from the lung to the various peripheral tissues. This Triturus cristatus (Great crested newt) protein is Hemoglobin subunit alpha-1.